The sequence spans 299 residues: Probable lipid kinase YegS (299 aa).

In terms of domain architecture, DAGKc spans 2–133 (ANFPDSLLIL…IDMARVNDKT (132 aa)). ATP-binding positions include threonine 40, 66–72 (GDGTINE), and threonine 95. Residues leucine 215, aspartate 218, and leucine 220 each contribute to the Mg(2+) site. Glutamate 271 acts as the Proton acceptor in catalysis.

This sequence belongs to the diacylglycerol/lipid kinase family. YegS lipid kinase subfamily. It depends on Mg(2+) as a cofactor. Ca(2+) is required as a cofactor.

The protein localises to the cytoplasm. Its function is as follows. Probably phosphorylates lipids; the in vivo substrate is unknown. The protein is Probable lipid kinase YegS of Salmonella arizonae (strain ATCC BAA-731 / CDC346-86 / RSK2980).